A 1019-amino-acid polypeptide reads, in one-letter code: Photoactivated adenylate cyclase subunit alpha (1019 aa).

The BLUF 1 domain maps to 55 to 148 (LRRLMYLSAS…GRMYGEWHMK (94 aa)). The Guanylate cyclase 1 domain occupies 204 to 332 (VVTFIYLVEF…DCINTASRIT (129 aa)). Residues 467-559 (LITLTYISQA…RVYGSPLDMT (93 aa)) enclose the BLUF 2 domain. The region spanning 615-744 (VMLATDICSF…EVSARVMEVE (130 aa)) is the Guanylate cyclase 2 domain. Positions 822-861 (GTNAPGRGAPAGGIPSSPKVRPPGRTNSVSSYTPDPNEAL) are disordered. Residues 825–839 (APGRGAPAGGIPSSP) are compositionally biased toward low complexity. Over residues 846–855 (RTNSVSSYTP) the composition is skewed to polar residues.

This sequence belongs to the adenylyl cyclase class-4/guanylyl cyclase family. Heterotetramer of two alpha and two beta subunits. It depends on FAD as a cofactor.

It is found in the cell projection. It localises to the cilium. The protein localises to the flagellum. It carries out the reaction ATP = 3',5'-cyclic AMP + diphosphate. Its activity is regulated as follows. Activity increased by up to 80-fold under blue light. Its function is as follows. Acts as a blue light photoreceptor for the step-up photophobic response. Mediates photoavoidance. In Euglena gracilis, this protein is Photoactivated adenylate cyclase subunit alpha.